Reading from the N-terminus, the 350-residue chain is Neutral protease 2 homolog SNOG_10522 (350 aa).

A signal peptide spans 1-18 (MKVSSQLAVAALASFATA). The propeptide occupies 19-180 (ASVDVHKRET…AKALNKRTAI (162 aa)). 2 disulfide bridges follow: Cys-184–Cys-251 and Cys-258–Cys-276. His-301 is a binding site for Zn(2+). Glu-302 is an active-site residue. Zn(2+) is bound by residues His-305 and Asp-316.

Belongs to the peptidase M35 family. The cofactor is Zn(2+).

It localises to the secreted. It carries out the reaction Preferential cleavage of bonds with hydrophobic residues in P1'. Also 3-Asn-|-Gln-4 and 8-Gly-|-Ser-9 bonds in insulin B chain.. Secreted metalloproteinase that allows assimilation of proteinaceous substrates. Shows high activities on basic nuclear substrates such as histone and protamine. This Phaeosphaeria nodorum (strain SN15 / ATCC MYA-4574 / FGSC 10173) (Glume blotch fungus) protein is Neutral protease 2 homolog SNOG_10522.